Here is a 105-residue protein sequence, read N- to C-terminus: UPF0235 protein RP839 (105 aa).

Belongs to the UPF0235 family.

The polypeptide is UPF0235 protein RP839 (Rickettsia prowazekii (strain Madrid E)).